The following is an 86-amino-acid chain: Toxin Td8 (86 aa).

Positions 1–20 (MTRFVLFLSCFFLIGMVVEC) are cleaved as a signal peptide. The LCN-type CS-alpha/beta domain occupies 21 to 83 (KDGYLVGDDG…IWNSATNRCR (63 aa)). Intrachain disulfides connect cysteine 31–cysteine 82, cysteine 35–cysteine 57, cysteine 43–cysteine 63, and cysteine 47–cysteine 65. Arginine 83 is modified (arginine amide).

Expressed by the venom gland.

The protein localises to the secreted. Beta toxins bind voltage-independently at site-4 of sodium channels (Nav) and shift the voltage of activation toward more negative potentials thereby affecting sodium channel activation and promoting spontaneous and repetitive firing. In Tityus discrepans (Venezuelan scorpion), this protein is Toxin Td8.